We begin with the raw amino-acid sequence, 1337 residues long: Activated Cdc42 kinase-like (1337 aa).

Ser71 carries the phosphoserine modification. Residues 133–399 form the Protein kinase domain; it reads ISVNKQLGTG…GEIYDQLPDM (267 aa). Residues 139–147 and Lys164 contribute to the ATP site; that span reads LGTGEFGIV. Catalysis depends on Asp260, which acts as the Proton acceptor. Phosphotyrosine is present on residues Tyr291 and Tyr292. The 62-residue stretch at 399–460 folds into the SH3 domain; it reads MKPEQLKAVV…NPSNTVAFLE (62 aa). Residues 488–502 enclose the CRIB domain; sequence ISKPQNDFKHTGHVG. Residues 714-739 are disordered; it reads SGDTNGNKHGHGLLPTLSKKKSSGTV. Residues Ser764 and Ser778 each carry the phosphoserine modification. Residues 786 to 822 form a disordered region; sequence RFPHLSNNGSGDKSGGLGTSGSAHTPTHGNASPFPKK. A compositionally biased stretch (polar residues) spans 805 to 815; sequence SGSAHTPTHGN. Residues Ser831, Ser918, and Ser924 each carry the phosphoserine modification. Disordered regions lie at residues 906 to 969 and 1024 to 1045; these read AGLS…TSTK and PSGMRRPSRPSEREYENMPTVG. A compositionally biased stretch (pro residues) spans 947–957; sequence PESPNPIPLPP.

Belongs to the protein kinase superfamily. Tyr protein kinase family.

The catalysed reaction is L-tyrosyl-[protein] + ATP = O-phospho-L-tyrosyl-[protein] + ADP + H(+). In terms of biological role, likely to act as a downstream effector of Cdc42 during dorsal closure, acting in a kinase independent manner with the other ACK family member Ack to positively regulate expression of the myosin zip by promoting the endocytosis of Egfr in the amnioserosa (AS). This Drosophila melanogaster (Fruit fly) protein is Activated Cdc42 kinase-like.